We begin with the raw amino-acid sequence, 476 residues long: Acidic leucine-rich nuclear phosphoprotein 32-related protein 1 (476 aa).

LRR repeat units lie at residues 51–72, 73–92, and 98–119; these read SLEHLSIAGVGVASLAGFPRLR, NLTRLTLSDNRIAGGLDHLV, and SLRDLDLSNNRIQDVGDLSPLA. The LRRCT domain occupies 131-169; the sequence is CPVTRVKDYRSKVFGMIRTLKYLDKMDADENERPESDDD. A disordered region spans residues 157-476; the sequence is DADENERPES…VEDLRPFKHH (320 aa). Acidic residues-rich tracts occupy residues 165–194, 222–232, 252–289, 299–329, 353–371, 379–396, 415–436, and 458–467; these read ESDDDDDDGDGDGDGEEEEDDDDDEDEDPG, DVDEDESDADE, GDEDEYVEEEDDDDEEDYEEEDDLGEEIDEDGDDEDAV, SDEEEDGIEEEDEEEDEDEEEVEDDGEEAEP, EGEDEDENGEIGEEDEERL, EGNDDDEEDVDDEDEDTE, DAAEADDADEDRDEVDDDDDGG, and GDDDEDDDGV.

This sequence belongs to the ANP32 family.

The polypeptide is Acidic leucine-rich nuclear phosphoprotein 32-related protein 1 (Oryza sativa subsp. japonica (Rice)).